The chain runs to 318 residues: Probable cell division protein WhiA (318 aa).

Positions T276–N310 form a DNA-binding region, H-T-H motif.

Belongs to the WhiA family.

Its function is as follows. Involved in cell division and chromosome segregation. This chain is Probable cell division protein WhiA, found in Exiguobacterium sibiricum (strain DSM 17290 / CCUG 55495 / CIP 109462 / JCM 13490 / 255-15).